The sequence spans 301 residues: MIQILGKTNIDFLGKKYIALALSCIMIILGIFAIFQIHAGKANLGVDFAGGLSLQIRFSQPVTLAEVRTVLDKAGIKDADIQELPTEKKILIKLKKQQEGIQDTIEKALKENLTAKEPIIESVTEIGPKIGERTKRDALFAILAATAGILIYIAIRFKFHFSIGATVATFHDVMAVLGIFYILDKEINLIFISALLTIAGYSLTDTVVVFDRIRENLGKVAKGTMTLEALMNKSINEVLSRTIVTSLTTLMAAVALFFFGGEVLHDFALAMILGILVGTYSSIFVASPVVLLLGKNSLIKR.

6 consecutive transmembrane segments (helical) span residues 17–37 (YIAL…IFQI), 137–157 (DALF…AIRF), 163–183 (IGAT…FYIL), 190–210 (IFIS…VVVF), 239–261 (LSRT…FFGG), and 272–292 (ILGI…VVLL).

The protein belongs to the SecD/SecF family. SecF subfamily. In terms of assembly, forms a complex with SecD. Part of the essential Sec protein translocation apparatus which comprises SecA, SecYEG and auxiliary proteins SecDF. Other proteins may also be involved.

The protein resides in the cell inner membrane. Part of the Sec protein translocase complex. Interacts with the SecYEG preprotein conducting channel. SecDF uses the proton motive force (PMF) to complete protein translocation after the ATP-dependent function of SecA. This is Protein translocase subunit SecF from Thermodesulfovibrio yellowstonii (strain ATCC 51303 / DSM 11347 / YP87).